We begin with the raw amino-acid sequence, 964 residues long: Protein HIRA (964 aa).

WD repeat units follow at residues 10–50, 64–103, 123–162, 165–204, 259–331, and 335–376; these read RHEG…KDNT, DHFGSVNCVRWAKHGRYLASGSDDQVILIHERKAGSGTSE, GHTADVVDLSWSPDDSTLASGSLDNTIHIWNMNNGICTAV, GHTSLVKGVTWDPIGSFIASQSDDKTVMIWRTSDWSLAHK, GHNA…PLFV, and FFSQ…HRLS. The disordered stretch occupies residues 453–490; that stretch reads SHEDSKKTAGPTADDVKKGNQLSSPVKQREYRRPDGRK. Over residues 479-490 the composition is skewed to basic and acidic residues; the sequence is KQREYRRPDGRK. The WD 7 repeat unit spans residues 644–685; the sequence is LWSDRISGKVTVLAGNANFWAVGCEDGFLQVYTRCGVRAMPA. Positions 920–940 form a coiled coil; sequence ASNRKVQRLLNEFMDLLLEYE.

Belongs to the WD repeat HIR1 family. In terms of assembly, interacts with RS2. As to expression, more abundant in apices and young leaf primordia than in fully expanded leaf tissues.

Its subcellular location is the nucleus. Functionally, histone chaperone involved in maintining knox genes silencing throughout leaf development. The chain is Protein HIRA from Zea mays (Maize).